A 64-amino-acid polypeptide reads, in one-letter code: Large ribosomal subunit protein bL35 (64 aa).

This sequence belongs to the bacterial ribosomal protein bL35 family.

The sequence is that of Large ribosomal subunit protein bL35 from Chlorobium limicola (strain DSM 245 / NBRC 103803 / 6330).